The following is a 242-amino-acid chain: Ribonuclease PH (242 aa).

Residues Arg-90 and 128–130 (GTR) contribute to the phosphate site.

The protein belongs to the RNase PH family. In terms of assembly, homohexameric ring arranged as a trimer of dimers.

It carries out the reaction tRNA(n+1) + phosphate = tRNA(n) + a ribonucleoside 5'-diphosphate. In terms of biological role, phosphorolytic 3'-5' exoribonuclease that plays an important role in tRNA 3'-end maturation. Removes nucleotide residues following the 3'-CCA terminus of tRNAs; can also add nucleotides to the ends of RNA molecules by using nucleoside diphosphates as substrates, but this may not be physiologically important. Probably plays a role in initiation of 16S rRNA degradation (leading to ribosome degradation) during starvation. The chain is Ribonuclease PH from Nocardioides sp. (strain ATCC BAA-499 / JS614).